The following is a 40-amino-acid chain: Omega-conotoxin RsXXVIA (40 aa).

Contains 4 disulfide bonds. Expressed by the venom duct.

It localises to the secreted. Omega-conotoxins act at presynaptic membranes, they bind and block voltage-gated calcium channels (Cav). This toxin inhibits rat Cav2.2/CACNA1B calcium channels in a dose-dependent manner (EC(50)=2.8 uM), whose effect is partially reversed after washing. In vivo, when injected into mice, it shows both an analgesic effect in acute thermal pain at 30 and 45 minutes post-injection and an anti-nociceptive effect in a formalin chronic pain test. In Conus regularis (Regular cone), this protein is Omega-conotoxin RsXXVIA.